The following is a 231-amino-acid chain: Ribose-5-phosphate isomerase A (231 aa).

Substrate is bound by residues 31 to 34 (SGST), 87 to 90 (DGAD), and 100 to 103 (KGGG). The active-site Proton acceptor is Glu-109. Residue Lys-127 participates in substrate binding.

It belongs to the ribose 5-phosphate isomerase family. Homodimer.

It catalyses the reaction aldehydo-D-ribose 5-phosphate = D-ribulose 5-phosphate. Its pathway is carbohydrate degradation; pentose phosphate pathway; D-ribose 5-phosphate from D-ribulose 5-phosphate (non-oxidative stage): step 1/1. Its function is as follows. Catalyzes the reversible conversion of ribose-5-phosphate to ribulose 5-phosphate. This is Ribose-5-phosphate isomerase A from Chlamydia pneumoniae (Chlamydophila pneumoniae).